The chain runs to 241 residues: Orotidine 5'-phosphate decarboxylase (241 aa).

Substrate-binding positions include aspartate 15, lysine 37, 64–73 (DLKYHDIPNT), threonine 126, arginine 187, glutamine 196, glycine 216, and arginine 217. The Proton donor role is filled by lysine 66.

This sequence belongs to the OMP decarboxylase family. Type 1 subfamily. Homodimer.

It catalyses the reaction orotidine 5'-phosphate + H(+) = UMP + CO2. It participates in pyrimidine metabolism; UMP biosynthesis via de novo pathway; UMP from orotate: step 2/2. Its function is as follows. Catalyzes the decarboxylation of orotidine 5'-monophosphate (OMP) to uridine 5'-monophosphate (UMP). The sequence is that of Orotidine 5'-phosphate decarboxylase from Trichlorobacter lovleyi (strain ATCC BAA-1151 / DSM 17278 / SZ) (Geobacter lovleyi).